A 156-amino-acid chain; its full sequence is Inorganic triphosphatase (156 aa).

A CYTH domain is found at 2-148 (GKEIEKKFIV…PRYLNSNLVK (147 aa)). The active-site Proton acceptor is Y29.

As to quaternary structure, homodimer.

It carries out the reaction triphosphate + H2O = phosphate + diphosphate. It catalyses the reaction ATP + H2O = ADP + phosphate + H(+). In terms of biological role, involved in the hydrolysis of the beta-gamma-phosphoanhydride linkage of triphosphate-containing substrates (inorganic or nucleoside-linked). Catalyzes vigorously the hydrolysis of inorganic triphosphate (PPPi), however it can also catalyze the hydrolysis of ATP to ADP and phosphate. It can use ribonucleotides such as GTP, CTP, or UTP and deoxynucleotides such as dATP, dGTP, dCTP, and dTTP. The polypeptide is Inorganic triphosphatase (Acetivibrio thermocellus (strain ATCC 27405 / DSM 1237 / JCM 9322 / NBRC 103400 / NCIMB 10682 / NRRL B-4536 / VPI 7372) (Clostridium thermocellum)).